A 302-amino-acid chain; its full sequence is Zinc finger protein-like 1 homolog (302 aa).

The B box-type; degenerate zinc finger occupies Met1–Trp43. An RING-type; atypical zinc finger spans residues Cys53–Ser101. A disordered region spans residues Ile168–Thr233. The segment covering Pro198 to Ser208 has biased composition (polar residues). Ser217 is modified (phosphoserine). The chain crosses the membrane as a helical span at residues Trp258 to Met278.

It belongs to the ZFPL1 family.

The protein resides in the membrane. This Drosophila pseudoobscura pseudoobscura (Fruit fly) protein is Zinc finger protein-like 1 homolog.